Here is a 380-residue protein sequence, read N- to C-terminus: Palmitoyltransferase ZDHHC18 (380 aa).

A disordered region spans residues 1 to 59; it reads MKDCEYQQISPGAAPPPASPGARRPGPAAPPAPSPGPAPGAPRWSGSGSGSGSLGRRPR. Residues 1–82 are Cytoplasmic-facing; that stretch reads MKDCEYQQIS…CGGRLMLAGH (82 aa). Ser19 carries the post-translational modification Phosphoserine. The segment covering 27 to 40 has biased composition (pro residues); the sequence is PAAPPAPSPGPAPG. A helical transmembrane segment spans residues 83–103; it reads GGVFALTLLLILSTTILFFVF. At 104–111 the chain is on the lumenal side; it reads DCPYLART. The chain crosses the membrane as a helical span at residues 112–132; the sequence is LTLAIPIIAAILFFFVMSCLL. Topologically, residues 133 to 227 are cytoplasmic; sequence QTSFTDPGIL…GNCVGRRNYR (95 aa). The DHHC domain occupies 184–234; the sequence is KYCFTCKMFRPPRTSHCSVCDNCVERFDHHCPWVGNCVGRRNYRFFYAFIL. Residue Cys214 is the S-palmitoyl cysteine intermediate of the active site. The helical transmembrane segment at 228–248 threads the bilayer; that stretch reads FFYAFILSLSFLTAFIFACVV. Over 249–269 the chain is Lumenal; the sequence is THLTLLSQGSNFLSALKKTPA. The helical transmembrane segment at 270 to 290 threads the bilayer; the sequence is SVLELVICFFSIWSILGLSGF. Residues 291 to 380 lie on the Cytoplasmic side of the membrane; the sequence is HTYLVASNLT…PDASMVGGHP (90 aa). The tract at residues 355-380 is disordered; that stretch reads ALPSPIRSDDPACGAKPDASMVGGHP.

Belongs to the DHHC palmitoyltransferase family. ERF2/ZDHHC9 subfamily. In terms of tissue distribution, ubiquitously expressed.

The protein localises to the golgi apparatus membrane. It catalyses the reaction L-cysteinyl-[protein] + hexadecanoyl-CoA = S-hexadecanoyl-L-cysteinyl-[protein] + CoA. In terms of biological role, palmitoyltransferase that catalyzes the addition of palmitate onto various protein substrates, such as CGAS, HRAS and LCK. Palmitoylates HRAS and LCK. Acts as a negative regulator of the cGAS-STING pathway be mediating palmitoylation and inactivation of CGAS. May also have a palmitoyltransferase activity toward the beta-2 adrenergic receptor/ADRB2 and therefore regulate G protein-coupled receptor signaling. The sequence is that of Palmitoyltransferase ZDHHC18 from Mus musculus (Mouse).